An 89-amino-acid chain; its full sequence is ATP synthase subunit c, sodium ion specific (89 aa).

2 helical membrane passes run 9–29 and 68–88; these read VVLAASAVGAGAAMIAGIGPG and GIYSLVIALILLYANPFVGLL.

Belongs to the ATPase C chain family. In terms of assembly, F-type ATPases have 2 components, F(1) - the catalytic core - and F(0) - the membrane sodium channel. F(1) has five subunits: alpha(3), beta(3), gamma(1), delta(1), epsilon(1). F(0) has three main subunits: a(1), b(2) and c(10-14). The alpha and beta chains form an alternating ring which encloses part of the gamma chain. F(1) is attached to F(0) by a central stalk formed by the gamma and epsilon chains, while a peripheral stalk is formed by the delta and b chains.

It is found in the cell membrane. Its function is as follows. F(1)F(0) ATP synthase produces ATP from ADP in the presence of a proton or sodium gradient. F-type ATPases consist of two structural domains, F(1) containing the extramembraneous catalytic core and F(0) containing the membrane sodium channel, linked together by a central stalk and a peripheral stalk. During catalysis, ATP synthesis in the catalytic domain of F(1) is coupled via a rotary mechanism of the central stalk subunits to sodium translocation. In terms of biological role, key component of the F(0) channel; it plays a direct role in translocation across the membrane. A homomeric c-ring of between 10-14 subunits forms the central stalk rotor element with the F(1) delta and epsilon subunits. The chain is ATP synthase subunit c, sodium ion specific (atpE) from Propionigenium modestum.